Here is a 78-residue protein sequence, read N- to C-terminus: Large ribosomal subunit protein bL28 (78 aa).

Residues 1–21 (MSRVCQVTGKSPITGNNVSHA) are disordered. Over residues 8–21 (TGKSPITGNNVSHA) the composition is skewed to polar residues.

This sequence belongs to the bacterial ribosomal protein bL28 family.

The chain is Large ribosomal subunit protein bL28 from Hahella chejuensis (strain KCTC 2396).